The primary structure comprises 305 residues: C alpha-dehydrogenase (305 aa).

10–34 (FITGGASGAGFGQAKVFGQAGAKIV) contacts NAD(+). Substrate is bound at residue Ser144. Residue Tyr157 is the Proton acceptor of the active site.

Belongs to the short-chain dehydrogenases/reductases (SDR) family.

It functions in the pathway secondary metabolite metabolism; lignin degradation. Its function is as follows. Catalyzes the C alpha dehydrogenation of arylglycerol-beta-aryl ether (C alpha alcohol type) (compound IV). The sequence is that of C alpha-dehydrogenase (ligD) from Sphingobium sp. (strain NBRC 103272 / SYK-6).